A 204-amino-acid chain; its full sequence is Thiamine-phosphate synthase (204 aa).

Residues Q32 to K36 and D64 contribute to the 4-amino-2-methyl-5-(diphosphooxymethyl)pyrimidine site. Mg(2+)-binding residues include D65 and D84. T103 is a binding site for 4-amino-2-methyl-5-(diphosphooxymethyl)pyrimidine. T129–T131 is a binding site for 2-[(2R,5Z)-2-carboxy-4-methylthiazol-5(2H)-ylidene]ethyl phosphate. Residue K132 coordinates 4-amino-2-methyl-5-(diphosphooxymethyl)pyrimidine. G165 contributes to the 2-[(2R,5Z)-2-carboxy-4-methylthiazol-5(2H)-ylidene]ethyl phosphate binding site.

The protein belongs to the thiamine-phosphate synthase family. It depends on Mg(2+) as a cofactor.

The enzyme catalyses 2-[(2R,5Z)-2-carboxy-4-methylthiazol-5(2H)-ylidene]ethyl phosphate + 4-amino-2-methyl-5-(diphosphooxymethyl)pyrimidine + 2 H(+) = thiamine phosphate + CO2 + diphosphate. It carries out the reaction 2-(2-carboxy-4-methylthiazol-5-yl)ethyl phosphate + 4-amino-2-methyl-5-(diphosphooxymethyl)pyrimidine + 2 H(+) = thiamine phosphate + CO2 + diphosphate. It catalyses the reaction 4-methyl-5-(2-phosphooxyethyl)-thiazole + 4-amino-2-methyl-5-(diphosphooxymethyl)pyrimidine + H(+) = thiamine phosphate + diphosphate. Its pathway is cofactor biosynthesis; thiamine diphosphate biosynthesis; thiamine phosphate from 4-amino-2-methyl-5-diphosphomethylpyrimidine and 4-methyl-5-(2-phosphoethyl)-thiazole: step 1/1. In terms of biological role, condenses 4-methyl-5-(beta-hydroxyethyl)thiazole monophosphate (THZ-P) and 2-methyl-4-amino-5-hydroxymethyl pyrimidine pyrophosphate (HMP-PP) to form thiamine monophosphate (TMP). The chain is Thiamine-phosphate synthase from Bacteroides fragilis (strain ATCC 25285 / DSM 2151 / CCUG 4856 / JCM 11019 / LMG 10263 / NCTC 9343 / Onslow / VPI 2553 / EN-2).